The chain runs to 423 residues: AUGMIN subunit 4 (423 aa).

The stretch at 267-287 forms a coiled coil; that stretch reads IEEIERDEAALREDLYSADRK.

Belongs to the HAUS4 family. In terms of assembly, part of the augmin complex composed of 8 subunits. The complex acts on microtubules and interacts with gamma-tubulin in spindles and the phragmoplast.

It localises to the cytoplasm. The protein resides in the cytoskeleton. Its subcellular location is the spindle. It is found in the phragmoplast. In terms of biological role, involved in microtubules reorganization during spindle and phragmoplast development. The chain is AUGMIN subunit 4 (AUG4) from Arabidopsis thaliana (Mouse-ear cress).